Here is a 338-residue protein sequence, read N- to C-terminus: LINE-1 retrotransposable element ORF1 protein (338 aa).

Residues 1–40 (MGKKQNRKTGNSKTQSASPPPKERSSSPATEQSWMENDFD) are disordered. 2 stretches are compositionally biased toward polar residues: residues 8 to 17 (KTGNSKTQSA) and 26 to 35 (SSPATEQSWM). Residues 49–153 (RSNYSELRED…QSLQEIWDYV (105 aa)) adopt a coiled-coil conformation. The RNA recognition motif (RRM) domain stretch occupies residues 157 to 252 (NLRLIGVPES…KGKPIRLTAD (96 aa)). Residues 253–317 (LSAETLQARR…TTRPALKELL (65 aa)) are C-terminal domain (CTD).

It belongs to the transposase 22 family. In terms of assembly, homotrimer (via coiled coil domain). May also form larger homooligomers. May interact with DDX39A, HNRNPA1, SERBP1 and YBX1. Interacts with TEX19 and UBR2. Interacts with MOV10. Interacts with APOBEC3D; this interaction inhibits LINE-1 retrotransposition. In terms of processing, polyubiquitinated, probably by UBR2, which induces its degradation.

Its subcellular location is the nucleus. The protein resides in the nucleolus. It is found in the cytoplasm. It localises to the cytoplasmic ribonucleoprotein granule. The protein localises to the stress granule. Functionally, nucleic acid-binding protein which is essential for retrotransposition of LINE-1 elements in the genome. Functions as a nucleic acid chaperone binding its own transcript and therefore preferentially mobilizing the transcript from which they are encoded. The protein is LINE-1 retrotransposable element ORF1 protein (L1RE1) of Homo sapiens (Human).